The sequence spans 534 residues: Bifunctional purine biosynthesis protein PurH (534 aa).

Residues 1–148 (MNTVRPIRRA…KNHQDVTIVV (148 aa)) enclose the MGS-like domain.

This sequence belongs to the PurH family.

The catalysed reaction is (6R)-10-formyltetrahydrofolate + 5-amino-1-(5-phospho-beta-D-ribosyl)imidazole-4-carboxamide = 5-formamido-1-(5-phospho-D-ribosyl)imidazole-4-carboxamide + (6S)-5,6,7,8-tetrahydrofolate. It catalyses the reaction IMP + H2O = 5-formamido-1-(5-phospho-D-ribosyl)imidazole-4-carboxamide. Its pathway is purine metabolism; IMP biosynthesis via de novo pathway; 5-formamido-1-(5-phospho-D-ribosyl)imidazole-4-carboxamide from 5-amino-1-(5-phospho-D-ribosyl)imidazole-4-carboxamide (10-formyl THF route): step 1/1. It functions in the pathway purine metabolism; IMP biosynthesis via de novo pathway; IMP from 5-formamido-1-(5-phospho-D-ribosyl)imidazole-4-carboxamide: step 1/1. This chain is Bifunctional purine biosynthesis protein PurH, found in Shewanella denitrificans (strain OS217 / ATCC BAA-1090 / DSM 15013).